A 130-amino-acid polypeptide reads, in one-letter code: Protein ApaG (130 aa).

The ApaG domain occupies 3-127 (KAETRGISVT…FSLDSPHVRR (125 aa)).

In Methylobacterium radiotolerans (strain ATCC 27329 / DSM 1819 / JCM 2831 / NBRC 15690 / NCIMB 10815 / 0-1), this protein is Protein ApaG.